The following is a 962-amino-acid chain: MKYNPNEIDAKWQKNWANNQTFAASNTSIKPKYYILDMFPYPSGAGLHVGHPLGYIASDIVARFKRHKGFNVLHPQGYDSFGLPAEQYAIQTGQHPDKTTKENIARYREQLDKIGFSFDWSREIRTSNANYYKHTQWIFIQLFNSWYNKSNDKAEDITTLISLFQKEGNTNINAVCDDNIAPFSAQDWTGFSSSKQQKILLQYRLTYLAETEVNWCPGLGTVLANDEIINGVSERGGHPVIRKKMTQWSMRISAYAERLLQGLNDIDWSESIKESQRNWIGKSVGAMVSFKVKNQKSQVTSEATLSDLRPSTLDYIEVFTTRPDTIFGVTFMTLAPEHPLVQEITTPEQKAAIEAYIEKTAKRSERERMADVKTISGVFTGAYAEHPFTKEQIPVWIGDYVLAGYGTGAVMAVPCGDERDYAFANFFKGQNGMPEIKNIFDNVDIATEAYGSKDNVIIANSDFLNGLNYKQATKKAIAELETLNQGKGKTNYRLRDAVFSRQRYWGEPFPVYYVNGLPQMIDAKHLPIALPEVEKYLPTEDGLPPLGNSAKWAWNTITNEVDFNENINNTTIYPLELNTMPGWAGSSWYWMRYMDPHNDNEFASPEAIKYWESVDLYIGGSEHATGHLLYARFWNKFLKDKGYAPTEEPFKKLINQGMILGNSAFVYRSEDSKKLYSKGLISDKTTQAIHVDLAIINETTNELDIEAFKKHPLYSDYANAEFILENGKYIVGREVEKMSKSKYNVVNPDDICNEYGADTLRLYEMFLGPLEQSKPWNTAGITGVFGFLKKLWRLYFDDNGLIVTNNEPSKESLKSLHKTIKKVTEDIENFSFNTSVSQFMICVNELGTQNCHERAILEPLAIILSPYAPHIAEELWSQLGNSESISTVAFPICHEKYLVESDKEYPVSFNGKMKFTINLPLDLTPAQIEEIIMKDERTIKQLDGNTPKKVIIIPGKVINLVG.

Positions 40-51 (PYPSGAGLHVGH) match the 'HIGH' region motif. The 'KMSKS' region signature appears at 737–741 (KMSKS). Lys-740 serves as a coordination point for ATP.

This sequence belongs to the class-I aminoacyl-tRNA synthetase family.

Its subcellular location is the cytoplasm. It carries out the reaction tRNA(Leu) + L-leucine + ATP = L-leucyl-tRNA(Leu) + AMP + diphosphate. The polypeptide is Leucine--tRNA ligase (Flavobacterium psychrophilum (strain ATCC 49511 / DSM 21280 / CIP 103535 / JIP02/86)).